We begin with the raw amino-acid sequence, 184 residues long: Photosystem I assembly protein Ycf4 (184 aa).

Transmembrane regions (helical) follow at residues 19–39 (ISNF…LLVG) and 57–77 (IVFF…LFIS).

Belongs to the Ycf4 family.

Its subcellular location is the plastid. The protein localises to the chloroplast thylakoid membrane. Functionally, seems to be required for the assembly of the photosystem I complex. The sequence is that of Photosystem I assembly protein Ycf4 from Nymphaea alba (White water-lily).